We begin with the raw amino-acid sequence, 78 residues long: D-alanyl carrier protein (78 aa).

In terms of domain architecture, Carrier spans 1–78; sequence MEFREQVLNL…KIVEALEELR (78 aa). At serine 36 the chain carries O-(pantetheine 4'-phosphoryl)serine.

It belongs to the DltC family. Post-translationally, 4'-phosphopantetheine is transferred from CoA to a specific serine of apo-DCP.

It is found in the cytoplasm. The protein operates within cell wall biogenesis; lipoteichoic acid biosynthesis. Carrier protein involved in the D-alanylation of lipoteichoic acid (LTA). The loading of thioester-linked D-alanine onto DltC is catalyzed by D-alanine--D-alanyl carrier protein ligase DltA. The DltC-carried D-alanyl group is further transferred to cell membrane phosphatidylglycerol (PG) by forming an ester bond, probably catalyzed by DltD. D-alanylation of LTA plays an important role in modulating the properties of the cell wall in Gram-positive bacteria, influencing the net charge of the cell wall. The protein is D-alanyl carrier protein of Staphylococcus aureus (strain Mu50 / ATCC 700699).